Here is a 218-residue protein sequence, read N- to C-terminus: Adenylate kinase (218 aa).

14-19 (GAGKGT) provides a ligand contact to ATP. The segment at 34 to 63 (STGDMFRAAIKAGTELGKQAKALMDEGKLV) is NMP. Residues T35, R40, 61–63 (KLV), 89–92 (GFPR), and Q96 contribute to the AMP site. The LID stretch occupies residues 126-163 (GRRVHQASGRSYHIVYNPPKVEGKDDVTGEDLIIRADD). Residues R127 and 136–137 (SY) contribute to the ATP site. Positions 160 and 171 each coordinate AMP. Residue K204 coordinates ATP.

Belongs to the adenylate kinase family. In terms of assembly, monomer.

It is found in the cytoplasm. It carries out the reaction AMP + ATP = 2 ADP. The protein operates within purine metabolism; AMP biosynthesis via salvage pathway; AMP from ADP: step 1/1. In terms of biological role, catalyzes the reversible transfer of the terminal phosphate group between ATP and AMP. Plays an important role in cellular energy homeostasis and in adenine nucleotide metabolism. In Mannheimia succiniciproducens (strain KCTC 0769BP / MBEL55E), this protein is Adenylate kinase.